A 291-amino-acid polypeptide reads, in one-letter code: Elongation factor Ts (291 aa).

The involved in Mg(2+) ion dislocation from EF-Tu stretch occupies residues 79–82 (TDFV).

Belongs to the EF-Ts family.

The protein localises to the cytoplasm. In terms of biological role, associates with the EF-Tu.GDP complex and induces the exchange of GDP to GTP. It remains bound to the aminoacyl-tRNA.EF-Tu.GTP complex up to the GTP hydrolysis stage on the ribosome. The chain is Elongation factor Ts from Stenotrophomonas maltophilia (strain K279a).